A 476-amino-acid chain; its full sequence is Protein transport protein Sec61 subunit alpha isoform 1 (476 aa).

The Cytoplasmic segment spans residues 1–33 (MAIKFLEVIKPFCVILPEIQKPERKIQFKEKVL). Residues 34–53 (WTAITLFIFLVCCQIPLFGI) form a helical membrane-spanning segment. Residues 54–76 (MSSDSADPFYWMRVILASNRGTL) lie on the Lumenal side of the membrane. The chain crosses the membrane as a helical span at residues 77 to 96 (MELGISPIVTSGLIMQLLAG). Over 97–117 (AKIIEVGDTPKDRALFNGAQK) the chain is Cytoplasmic. Residues 118 to 138 (LFGMIITIGQSIVYVMTGMYG) form a helical membrane-spanning segment. At 139-144 (DPSEMG) the chain is on the lumenal side. Residues 145-165 (AGICLLITIQLFVAGLIVLLL) form a helical membrane-spanning segment. The Cytoplasmic segment spans residues 166 to 172 (DELLQKG). A helical membrane pass occupies residues 173–193 (YGLGSGISLFIATNICETIVW). Over 194–240 (KAFSPTTVNTGRGMEFEGAIIALFHLLATRTDKVRALREAFYRQNLP) the chain is Lumenal. A helical membrane pass occupies residues 241–261 (NLMNLIATIFVFAVVIYFQGF). Residues 262–288 (RVDLPIKSARYRGQYNTYPIKLFYTSN) are Cytoplasmic-facing. Residues 289 to 309 (IPIILQSALVSNLYVISQMLS) form a helical membrane-spanning segment. Over 310–354 (ARFSGNLLVSLLGTWSDTSSGGPARAYPVGGLCYYLSPPESFGSV) the chain is Lumenal. A helical membrane pass occupies residues 355–375 (LEDPVHAVVYIVFMLGSCAFF). The Cytoplasmic segment spans residues 376–420 (SKTWIEVSGSSAKDVAKQLKEQQMVMRGHRETSMVHELNRYIPTA). The chain crosses the membrane as a helical span at residues 421–441 (AAFGGLCIGALSVLADFLGAI). Residues 442–445 (GSGT) lie on the Lumenal side of the membrane. The helical transmembrane segment at 446–462 (GILLAVTIIYQYFEIFV) threads the bilayer. Residues 463-476 (KEQSEVGSMGALLF) are Cytoplasmic-facing.

The protein belongs to the SecY/SEC61-alpha family. The SEC61 channel-forming translocon complex consists of channel-forming core components SEC61A1, SEC61B and SEC61G and different auxiliary components such as SEC62 and SEC63. The SEC61 channel associates with the multi-pass translocon (MPT) complex. As to expression, expressed in proximal and distal tubules in kidney (at protein level).

The protein resides in the endoplasmic reticulum membrane. Functionally, component of SEC61 channel-forming translocon complex that mediates transport of signal peptide-containing precursor polypeptides across the endoplasmic reticulum (ER). Forms a ribosome receptor and a gated pore in the ER membrane, both functions required for cotranslational translocation of nascent polypeptides. May cooperate with auxiliary protein SEC62, SEC63 and HSPA5/BiP to enable post-translational transport of small presecretory proteins. The SEC61 channel is also involved in ER membrane insertion of transmembrane proteins: it mediates membrane insertion of the first few transmembrane segments of proteins, while insertion of subsequent transmembrane regions of multi-pass membrane proteins is mediated by the multi-pass translocon (MPT) complex. The SEC61 channel cooperates with the translocating protein TRAM1 to import nascent proteins into the ER. Controls the passive efflux of calcium ions from the ER lumen to the cytosol through SEC61 channel, contributing to the maintenance of cellular calcium homeostasis. Plays a critical role in nephrogenesis, specifically at pronephros stage. This chain is Protein transport protein Sec61 subunit alpha isoform 1 (SEC61A1), found in Homo sapiens (Human).